The sequence spans 326 residues: Acetyl-coenzyme A carboxylase carboxyl transferase subunit alpha (326 aa).

Positions 45–298 constitute a CoA carboxyltransferase C-terminal domain; that stretch reads LEARAMQLRE…KQVLLENLDE (254 aa).

It belongs to the AccA family. Acetyl-CoA carboxylase is a heterohexamer composed of biotin carboxyl carrier protein (AccB), biotin carboxylase (AccC) and two subunits each of ACCase subunit alpha (AccA) and ACCase subunit beta (AccD).

It is found in the cytoplasm. The catalysed reaction is N(6)-carboxybiotinyl-L-lysyl-[protein] + acetyl-CoA = N(6)-biotinyl-L-lysyl-[protein] + malonyl-CoA. Its pathway is lipid metabolism; malonyl-CoA biosynthesis; malonyl-CoA from acetyl-CoA: step 1/1. In terms of biological role, component of the acetyl coenzyme A carboxylase (ACC) complex. First, biotin carboxylase catalyzes the carboxylation of biotin on its carrier protein (BCCP) and then the CO(2) group is transferred by the carboxyltransferase to acetyl-CoA to form malonyl-CoA. The chain is Acetyl-coenzyme A carboxylase carboxyl transferase subunit alpha from Nostoc punctiforme (strain ATCC 29133 / PCC 73102).